The chain runs to 514 residues: Putative transposase y4uI (514 aa).

The HTH IS408-type domain occupies 11-93 (VREILKLRLD…PDWSAVAREL (83 aa)). An Integrase catalytic domain is found at 128-317 (HGRLPLVMRQ…TRRALFDELD (190 aa)).

The protein belongs to the transposase IS21/IS408/IS1162 family.

This Sinorhizobium fredii (strain NBRC 101917 / NGR234) protein is Putative transposase y4uI.